Reading from the N-terminus, the 156-residue chain is Translation initiation factor IF-1, chloroplastic (156 aa).

Residues 1 to 81 (MASLSWWNPA…RRTTSIQCLS (81 aa)) constitute a chloroplast transit peptide. The segment at 51–79 (KSLLVKTQQQSKKKKNNSTNSRRTTSIQC) is disordered. The span at 67–76 (NSTNSRRTTS) shows a compositional bias: low complexity. In terms of domain architecture, S1-like spans 82–151 (QEQKWTHEGS…SKGRIIYRLR (70 aa)).

Belongs to the IF-1 family. Component of the 30S ribosomal translation pre-initiation complex which assembles on the 30S ribosome in the order IF-2 and IF-3, IF-1 and N-formylmethionyl-tRNA(fMet); mRNA recruitment can occur at any time during PIC assembly.

It localises to the plastid. The protein resides in the chloroplast. In terms of biological role, one of the essential components for the initiation of protein synthesis. Stabilizes the binding of IF-2 and IF-3 on the 30S subunit to which N-formylmethionyl-tRNA(fMet) subsequently binds. Helps modulate mRNA selection, yielding the 30S pre-initiation complex (PIC). Upon addition of the 50S ribosomal subunit IF-1, IF-2 and IF-3 are released leaving the mature 70S translation initiation complex. In Solanum lycopersicum (Tomato), this protein is Translation initiation factor IF-1, chloroplastic (infA).